A 92-amino-acid polypeptide reads, in one-letter code: Long neurotoxin 73 (92 aa).

Residues 1–21 (MKTLLLTLVVVTIVCLDLGDS) form the signal peptide. 5 cysteine pairs are disulfide-bonded: cysteine 24–cysteine 41, cysteine 34–cysteine 62, cysteine 47–cysteine 51, cysteine 66–cysteine 77, and cysteine 78–cysteine 83.

Belongs to the three-finger toxin family. Long-chain subfamily. Type II alpha-neurotoxin sub-subfamily. In terms of tissue distribution, expressed by the venom gland.

The protein localises to the secreted. Functionally, binds with high affinity to muscular (alpha-1/CHRNA1) and neuronal (alpha-7/CHRNA7) nicotinic acetylcholine receptor (nAChR) and inhibits acetylcholine from binding to the receptor, thereby impairing neuromuscular and neuronal transmission. The polypeptide is Long neurotoxin 73 (Drysdalia coronoides (White-lipped snake)).